The primary structure comprises 223 residues: Ras-related protein Rab-32 (223 aa).

The residue at position 2 (alanine 2) is an N-acetylalanine. Residues valine 34, glycine 35, lysine 36, threonine 37, serine 38, serine 49, glutamine 50, tyrosine 52, and threonine 55 each contribute to the GTP site. Threonine 37 contacts Mg(2+). A Switch 1 motif is present at residues 46–60 (QLFSQHYRATIGVDF). Threonine 55 serves as a coordination point for Mg(2+). Serine 69 carries the phosphoserine modification. Aspartate 79 contributes to the Mg(2+) binding site. Positions 82, 141, 142, 144, 173, and 174 each coordinate GTP. The Switch 2 motif lies at 82–95 (GQERFGNMTRVYYK). The interval 176-195 (NINIDEATRFLVENMLANQQ) is PKA-RII subunit binding domain. Residues cysteine 222 and cysteine 223 are each lipidated (S-geranylgeranyl cysteine).

This sequence belongs to the small GTPase superfamily. Rab family. In terms of assembly, interacts with ANKRD27. A decreased interaction with ANKRD27 seen in the presence of SGSM2. Interacts with LRRK2 (via N-terminus); this interaction results in stimulation of RAB10 phosphorylation by LRRK2. The cofactor is Mg(2+). In terms of tissue distribution, widely expressed with highest levels in liver. Strong expression also found in melanocyte, platelet, mast cell and fibroblast cell lines.

The protein resides in the mitochondrion. Its subcellular location is the mitochondrion outer membrane. It is found in the cytoplasmic vesicle. It localises to the phagosome. The protein localises to the phagosome membrane. The protein resides in the melanosome. Its subcellular location is the melanosome membrane. It catalyses the reaction GTP + H2O = GDP + phosphate + H(+). With respect to regulation, regulated by guanine the nucleotide exchange factor (GEF) BLOC-3 complex composed of HPS1 and HPS4 which promote the exchange of bound GDP for free GTP. Regulated by the GTPase activating protein (GAP) SGSM2/RUTBC1 which increases the GTP hydrolysis activity. Inhibited by GDP dissociation inhibitors (GDIs) which prevent Rab-GDP dissociation. In terms of biological role, the small GTPases Rab are key regulators of intracellular membrane trafficking, from the formation of transport vesicles to their fusion with membranes. Rabs cycle between an inactive GDP-bound form and an active GTP-bound form that is able to recruit to membranes different set of downstream effectors directly responsible for vesicle formation, movement, tethering and fusion. Also acts as an A-kinase anchoring protein by binding to the type II regulatory subunit of protein kinase A and anchoring it to the mitochondrion. Also involved in synchronization of mitochondrial fission. Plays a role in the maturation of phagosomes that engulf pathogens, such as S.aureus and M.tuberculosis. Plays an important role in the control of melanin production and melanosome biogenesis. In concert with RAB38, regulates the proper trafficking of melanogenic enzymes TYR, TYRP1 and DCT/TYRP2 to melanosomes in melanocytes. Stimulates phosphorylation of RAB10 'Thr-73' by LRRK2. In Mus musculus (Mouse), this protein is Ras-related protein Rab-32.